A 267-amino-acid chain; its full sequence is Interleukin-15 receptor subunit alpha (267 aa).

Positions M1–G30 are cleaved as a signal peptide. The 65-residue stretch at I31–R95 folds into the Sushi domain. Residues I31–T205 are Extracellular-facing. Disulfide bonds link C33–C75 and C59–C93. Residues Q102–T178 are disordered. Polar residues predominate over residues S108 to P124. Positions P129–A145 are enriched in low complexity. Residue N137 is glycosylated (N-linked (GlcNAc...) asparagine). Polar residues predominate over residues L152–I165. Residues V206–L228 traverse the membrane as a helical segment. Over K229–L267 the chain is Cytoplasmic.

The interleukin-15 receptor IL15R is a heterotrimer of IL15RA, IL2RB and IL2RG. IL15RA also self-associates. Interacts with SYK. N-glycosylated and O-glycosylated. Post-translationally, a soluble form (sIL-15RA) arises from proteolytic shedding of the membrane-anchored receptor. It also binds IL-15 and thus interferes with IL-15 binding to the membrane receptor. Expressed in neutrophils (at protein level). Expressed in fetal brain with higher expression in the hippocampus and cerebellum than in cortex and thalamus. Higher levels of soluble sIL-15RA form in comparison with membrane-bound forms is present in all brain structures. Isoforms 1, 3, 4, 5, 6, 7, 8 and 9: Widely expressed.

Its subcellular location is the membrane. The protein resides in the nucleus membrane. It is found in the cell surface. The protein localises to the endoplasmic reticulum membrane. It localises to the golgi apparatus membrane. Its subcellular location is the cytoplasmic vesicle membrane. The protein resides in the secreted. It is found in the extracellular space. In terms of biological role, high-affinity receptor for interleukin-15. Can signal both in cis and trans where IL15R from one subset of cells presents IL15 to neighboring IL2RG-expressing cells. In neutrophils, binds and activates kinase SYK in response to IL15 stimulation. In neutrophils, required for IL15-induced phagocytosis in a SYK-dependent manner. Expression of different isoforms may alter or interfere with signal transduction. Does not bind IL15. The sequence is that of Interleukin-15 receptor subunit alpha (IL15RA) from Homo sapiens (Human).